Consider the following 140-residue polypeptide: Protein ripply1 (140 aa).

The WRPW motif; required for gro2-binding motif lies at 28–31 (WRPW). The ripply homology domain stretch occupies residues 71–106 (HPVRLYWPRSKSFDYLFSDGEALLRNFPVQATINFY). The disordered stretch occupies residues 107–126 (DESDSEDEEESCDEDDESDV).

The protein belongs to the ripply family. As to quaternary structure, interacts with gro2 via the WRPW motif. As to expression, expressed in the embryonic anterior presomitic mesoderm and in newly formed somites.

The protein resides in the nucleus. Plays a role in somitogenesis. Essential for transcriptional repression of the segmental patterning genes, thus terminating the segmentation program in the presomitic mesoderm, and also required for the maintenance of rostrocaudal polarity in somites. The polypeptide is Protein ripply1 (Danio rerio (Zebrafish)).